The sequence spans 379 residues: Queuine tRNA-ribosyltransferase (379 aa).

D94 functions as the Proton acceptor in the catalytic mechanism. Residues 94–98 (DSGGF), D148, Q191, and G218 each bind substrate. An RNA binding region spans residues 249 to 255 (GVGSPDS). D268 functions as the Nucleophile in the catalytic mechanism. Residues 273-277 (TRIAR) form an RNA binding; important for wobble base 34 recognition region. 4 residues coordinate Zn(2+): C306, C308, C311, and H337.

Belongs to the queuine tRNA-ribosyltransferase family. As to quaternary structure, homodimer. Within each dimer, one monomer is responsible for RNA recognition and catalysis, while the other monomer binds to the replacement base PreQ1. It depends on Zn(2+) as a cofactor.

The enzyme catalyses 7-aminomethyl-7-carbaguanine + guanosine(34) in tRNA = 7-aminomethyl-7-carbaguanosine(34) in tRNA + guanine. It functions in the pathway tRNA modification; tRNA-queuosine biosynthesis. Functionally, catalyzes the base-exchange of a guanine (G) residue with the queuine precursor 7-aminomethyl-7-deazaguanine (PreQ1) at position 34 (anticodon wobble position) in tRNAs with GU(N) anticodons (tRNA-Asp, -Asn, -His and -Tyr). Catalysis occurs through a double-displacement mechanism. The nucleophile active site attacks the C1' of nucleotide 34 to detach the guanine base from the RNA, forming a covalent enzyme-RNA intermediate. The proton acceptor active site deprotonates the incoming PreQ1, allowing a nucleophilic attack on the C1' of the ribose to form the product. After dissociation, two additional enzymatic reactions on the tRNA convert PreQ1 to queuine (Q), resulting in the hypermodified nucleoside queuosine (7-(((4,5-cis-dihydroxy-2-cyclopenten-1-yl)amino)methyl)-7-deazaguanosine). This Bacillus mycoides (strain KBAB4) (Bacillus weihenstephanensis) protein is Queuine tRNA-ribosyltransferase.